The chain runs to 180 residues: dCTP deaminase, dUMP-forming (180 aa).

Residues 100–105, aspartate 117, 125–127, glutamine 146, tyrosine 160, and glutamine 167 contribute to the dCTP site; these read RSSLGR and TLE. The Proton donor/acceptor role is filled by glutamate 127.

It belongs to the dCTP deaminase family. As to quaternary structure, homotrimer.

It catalyses the reaction dCTP + 2 H2O = dUMP + NH4(+) + diphosphate. It participates in pyrimidine metabolism; dUMP biosynthesis; dUMP from dCTP: step 1/1. Functionally, bifunctional enzyme that catalyzes both the deamination of dCTP to dUTP and the hydrolysis of dUTP to dUMP without releasing the toxic dUTP intermediate. The polypeptide is dCTP deaminase, dUMP-forming (Persephonella marina (strain DSM 14350 / EX-H1)).